Consider the following 323-residue polypeptide: MGILSFLPVLATESDWADCKSPQPWGHMLLWTAVLFLAPVAGTPAAPPKAVLKLEPQWINVLQEDSVTLTCRGTHSPESDSIQWFHNGNLIPTHTQPSYRFKANNNDSGEYTCQTGQTSLSDPVHLTVLSEWLVLQTPHLEFQEGETIVLRCHSWKDKPLVKVTFFQNGKSKKFSRSDPNFSIPQANHSHSGDYHCTGNIGYTLYSSKPVTITVQAPSSSPMGIIVAVVTGIAVAAIVAAVVALIYCRKKRISANSTDPVKAAQFEPPGRQMIAIRKRQPEETNNDYETADGGYMTLNPRAPTDDDKNIYLTLPPNDHVNSNN.

Residues 1–42 form the signal peptide; the sequence is MGILSFLPVLATESDWADCKSPQPWGHMLLWTAVLFLAPVAG. Residues 43–223 are Extracellular-facing; it reads TPAAPPKAVL…VQAPSSSPMG (181 aa). Ig-like C2-type domains lie at 48–127 and 131–213; these read PKAV…VHLT and EWLV…VTIT. 2 disulfide bridges follow: Cys71/Cys113 and Cys152/Cys196. Residues Asn106, Asn180, and Asn187 are each glycosylated (N-linked (GlcNAc...) asparagine). The chain crosses the membrane as a helical span at residues 224-246; it reads IIVAVVTGIAVAAIVAAVVALIY. Residues 247–323 lie on the Cytoplasmic side of the membrane; the sequence is CRKKRISANS…PPNDHVNSNN (77 aa). The interval 277–323 is disordered; the sequence is KRQPEETNNDYETADGGYMTLNPRAPTDDDKNIYLTLPPNDHVNSNN. Phosphotyrosine; by SRC-type Tyr-kinases occurs at positions 294 and 310.

Phosphorylated by SRC-type Tyr-kinases such as LYN, BLK, FYN and SYK. In terms of tissue distribution, isoform IIC1 is detected in monocytes, macrophages, polymorphonuclear cells and natural killer cells.

The protein localises to the cytoplasm. The protein resides in the cell membrane. Its function is as follows. Receptor for the Fc region of complexed immunoglobulins gamma. Low affinity receptor. Involved in a variety of effector and regulatory functions such as phagocytosis of immune complexes and modulation of antibody production by B-cells. This chain is Low affinity immunoglobulin gamma Fc region receptor II-c (FCGR2C), found in Homo sapiens (Human).